Consider the following 152-residue polypeptide: Protein SprT-like (152 aa).

Positions 13 to 148 constitute a SprT-like domain; it reads NYVKKVSIED…FACGYCHGRL (136 aa). Histidine 72 contributes to the Zn(2+) binding site. The active site involves glutamate 73. Zn(2+) is bound at residue histidine 76.

It belongs to the SprT family. Zn(2+) serves as cofactor.

Its subcellular location is the cytoplasm. The chain is Protein SprT-like from Streptococcus agalactiae serotype III (strain NEM316).